The following is a 122-amino-acid chain: Small ribosomal subunit protein uS13 (122 aa).

Positions 99–122 (RGQRTHTNARTRKGPAKAIAGKKK) are disordered.

Belongs to the universal ribosomal protein uS13 family. Part of the 30S ribosomal subunit. Forms a loose heterodimer with protein S19. Forms two bridges to the 50S subunit in the 70S ribosome.

Its function is as follows. Located at the top of the head of the 30S subunit, it contacts several helices of the 16S rRNA. In the 70S ribosome it contacts the 23S rRNA (bridge B1a) and protein L5 of the 50S subunit (bridge B1b), connecting the 2 subunits; these bridges are implicated in subunit movement. Contacts the tRNAs in the A and P-sites. The protein is Small ribosomal subunit protein uS13 of Rhizobium meliloti (strain 1021) (Ensifer meliloti).